The primary structure comprises 114 residues: UPF0145 protein TTHA1944 (114 aa).

Belongs to the UPF0145 family.

The polypeptide is UPF0145 protein TTHA1944 (Thermus thermophilus (strain ATCC 27634 / DSM 579 / HB8)).